We begin with the raw amino-acid sequence, 341 residues long: Type II restriction enzyme BgcI specificity subunit S.BcgI (341 aa).

The protein belongs to the type-I restriction system S methylase family. As to quaternary structure, heterotrimer of two A and one B subunit. Both subunits are necessary for DNA-binding, which is sequence non-specific. The cofactor is Mg(2+).

It carries out the reaction Endonucleolytic cleavage of DNA to give specific double-stranded fragments with terminal 5'-phosphates.. With respect to regulation, DNA restriction requires S-adenosyl-L-methionine and Mg(2+), and is inhibited by S-adenosyl-homocysteine. SAM may be a cofactor for DNA restriction. The specificity subunit. A B, G, H and S subtype restriction enzyme that recognizes the double-stranded sequence 5'-CGAN(6)TGC-3' and cleaves bilaterally and symmetrically 10 base pairs upstream and 12 base pairs downstream of the sequence to release a 34-base pair fragment. Methylation of the recognition sequence occurs on the adenine in either one or both strands; seems to methylate restricted DNA. This subunit degrades DNA in a non-specific manner. This chain is Type II restriction enzyme BgcI specificity subunit S.BcgI, found in Heyndrickxia coagulans (Weizmannia coagulans).